We begin with the raw amino-acid sequence, 421 residues long: Serine--tRNA ligase (421 aa).

Thr-230–Glu-232 lines the L-serine pocket. Position 261 to 263 (Arg-261 to Glu-263) interacts with ATP. Glu-284 lines the L-serine pocket. Glu-348–Ser-351 provides a ligand contact to ATP. Ser-383 provides a ligand contact to L-serine.

Belongs to the class-II aminoacyl-tRNA synthetase family. Type-1 seryl-tRNA synthetase subfamily. In terms of assembly, homodimer. The tRNA molecule binds across the dimer.

The protein localises to the cytoplasm. It carries out the reaction tRNA(Ser) + L-serine + ATP = L-seryl-tRNA(Ser) + AMP + diphosphate + H(+). The enzyme catalyses tRNA(Sec) + L-serine + ATP = L-seryl-tRNA(Sec) + AMP + diphosphate + H(+). The protein operates within aminoacyl-tRNA biosynthesis; selenocysteinyl-tRNA(Sec) biosynthesis; L-seryl-tRNA(Sec) from L-serine and tRNA(Sec): step 1/1. Its function is as follows. Catalyzes the attachment of serine to tRNA(Ser). Is also able to aminoacylate tRNA(Sec) with serine, to form the misacylated tRNA L-seryl-tRNA(Sec), which will be further converted into selenocysteinyl-tRNA(Sec). This is Serine--tRNA ligase from Finegoldia magna (strain ATCC 29328 / DSM 20472 / WAL 2508) (Peptostreptococcus magnus).